The chain runs to 421 residues: Putative zinc finger protein R05D3.3 (421 aa).

C2H2-type zinc fingers lie at residues 207 to 228 (VLCV…IEAH) and 234 to 257 (YKCS…RTQH). The segment at 400–421 (GSSITDSNEPGPSEIKKELAEV) is disordered.

The protein resides in the nucleus. This chain is Putative zinc finger protein R05D3.3, found in Caenorhabditis elegans.